We begin with the raw amino-acid sequence, 468 residues long: UDP-N-acetylmuramate--L-alanine ligase (468 aa).

107 to 113 (GTHGKTT) contacts ATP.

It belongs to the MurCDEF family.

It localises to the cytoplasm. The enzyme catalyses UDP-N-acetyl-alpha-D-muramate + L-alanine + ATP = UDP-N-acetyl-alpha-D-muramoyl-L-alanine + ADP + phosphate + H(+). It participates in cell wall biogenesis; peptidoglycan biosynthesis. Functionally, cell wall formation. This Roseiflexus sp. (strain RS-1) protein is UDP-N-acetylmuramate--L-alanine ligase.